The primary structure comprises 1256 residues: Putative protein DDB_G0292252 (1256 aa).

Disordered regions lie at residues 1 to 53 (MSDD…NNNN), 145 to 243 (LLNG…SISR), 898 to 951 (EQQQ…PVET), and 1069 to 1136 (SHPT…ATIS). Over residues 147-214 (NGNNSNNNSN…NGNNINTSNG (68 aa)) the composition is skewed to low complexity. Polar residues predominate over residues 222 to 243 (QTESTEQDFTSTSQNSTPSISR). Low complexity-rich tracts occupy residues 898–916 (EQQQQQQQQQSNLNNSNNE) and 925–942 (TTAATTTTTTTTTTTTTT). Over residues 1069-1079 (SHPTIQSTSSP) the composition is skewed to polar residues. The segment covering 1080 to 1136 (STSSSNNNNSTTTATNNNGNNGNNNNGNGNNNNNNNNNNNNNNNNNNNNNNGPATIS) has biased composition (low complexity).

The polypeptide is Putative protein DDB_G0292252 (Dictyostelium discoideum (Social amoeba)).